Consider the following 322-residue polypeptide: 4-hydroxythreonine-4-phosphate dehydrogenase (322 aa).

Histidine 126 and threonine 127 together coordinate substrate. 3 residues coordinate a divalent metal cation: histidine 160, histidine 205, and histidine 260. Substrate contacts are provided by lysine 268, asparagine 277, and arginine 286.

The protein belongs to the PdxA family. As to quaternary structure, homodimer. It depends on Zn(2+) as a cofactor. Requires Mg(2+) as cofactor. Co(2+) is required as a cofactor.

Its subcellular location is the cytoplasm. The catalysed reaction is 4-(phosphooxy)-L-threonine + NAD(+) = 3-amino-2-oxopropyl phosphate + CO2 + NADH. The protein operates within cofactor biosynthesis; pyridoxine 5'-phosphate biosynthesis; pyridoxine 5'-phosphate from D-erythrose 4-phosphate: step 4/5. Catalyzes the NAD(P)-dependent oxidation of 4-(phosphooxy)-L-threonine (HTP) into 2-amino-3-oxo-4-(phosphooxy)butyric acid which spontaneously decarboxylates to form 3-amino-2-oxopropyl phosphate (AHAP). This chain is 4-hydroxythreonine-4-phosphate dehydrogenase, found in Paracoccus denitrificans (strain Pd 1222).